A 457-amino-acid chain; its full sequence is MGADVLIEQEISYTINFSQDLLYLILDSYIKKRCAAPAERYTDLYDANNVRTRQTADSAVSVHKTNLRDERFVHWLRSSNALVPLVRRENRETAVPHDRVSRHIASLIETTVYKLDGVDVKFEHVYMQSGPADRYESTAAHKIAALKTALLGVDCARPSQNLQLGSDAVLARVRLELEFEGAAPAAASLDAFCELVVQMETLADHHNIAPCLPYTTLLDSATPRRFTREQRIAYGAQAPDSTGVKKWAFKLDGVRGRGAFRRGYCLVQTDDMQLHAACISSPFGLNNVVTFQCEVVADKIFVTDLLQVFRYKYNNRTQYECNLHDAYPINADVAVECLNRLHCAVGSVPWPGLGELRFQQFFDPPLAPTHYTTIPIDGYIVLDEQLQYAKYKWLPTVELEYDAPSGALHSIDGPLLGKTVVADLQLKHGAVYECAITDNAINVLKCRPDRIVPSKVC.

The tract at residues 1-199 (MGADVLIEQE…DAFCELVVQM (199 aa)) is mRNA triphosphatase. Positions 200–454 (ETLADHHNIA…KCRPDRIVPS (255 aa)) are mRNA guanylyltransferase. Residue Lys-250 is the N6-GMP-lysine intermediate of the active site.

It belongs to the baculoviridae LEF-4 family.

It is found in the host cytoplasm. The protein resides in the host nucleus. The catalysed reaction is a 5'-end diphospho-ribonucleoside in mRNA + GTP + H(+) = a 5'-end (5'-triphosphoguanosine)-ribonucleoside in mRNA + diphosphate. It carries out the reaction a 5'-end triphospho-ribonucleoside in mRNA + H2O = a 5'-end diphospho-ribonucleoside in mRNA + phosphate + H(+). Component of the viral DNA-dependent RNA polymerase that catalyzes two reactions involved in viral RNA cap formation: an RNA 5'-triphosphatase that hydrolyzes the gamma phosphate of triphosphate-terminated RNA and a guanylyltransferase that reacts with GTP to form a covalent protein-guanylate adduct. Therefore plays an essential role in late and very late gene expression. The protein is mRNA capping enzyme LEF-4 (LEF-4) of Orgyia pseudotsugata (Douglas-fir tussock moth).